The sequence spans 366 residues: Gelsolin-like protein 2 (366 aa).

Gelsolin-like repeat units follow at residues 55–139 (NFKV…DLFL), 177–252 (KHIV…HEFY), and 286–327 (KSTV…AQEK). Residues 100–116 (KSTQDEYCVAAYKTVEL) are actin binding. The actin-actin interfilament contact point stretch occupies residues 104-107 (DEYC).

This sequence belongs to the villin/gelsolin family. Interacts with actin monomers and filaments. Expressed in circular and longitudinal muscle, pseudohearts, pharynx and gizzard. Not expressed in seminal vesicles.

Its subcellular location is the cytoplasm. The protein localises to the cytoskeleton. In terms of biological role, calcium-regulated protein that binds to the plus (or barbed) ends of actin monomers or filaments, preventing monomer exchange (end-blocking or capping). Can promote the assembly of monomers into filaments (nucleation) as well as sever existing filaments. The protein is Gelsolin-like protein 2 of Lumbricus terrestris (Common earthworm).